We begin with the raw amino-acid sequence, 96 residues long: Putative pterin-4-alpha-carbinolamine dehydratase (96 aa).

It belongs to the pterin-4-alpha-carbinolamine dehydratase family.

The catalysed reaction is (4aS,6R)-4a-hydroxy-L-erythro-5,6,7,8-tetrahydrobiopterin = (6R)-L-erythro-6,7-dihydrobiopterin + H2O. This Metallosphaera sedula (strain ATCC 51363 / DSM 5348 / JCM 9185 / NBRC 15509 / TH2) protein is Putative pterin-4-alpha-carbinolamine dehydratase.